A 365-amino-acid chain; its full sequence is Putative DNA-directed RNA polymerase subunit alpha-like 3 (365 aa).

The protein belongs to the RNA polymerase alpha chain family. In plastids the minimal PEP RNA polymerase catalytic core is composed of four subunits: alpha, beta, beta', and beta''. When a (nuclear-encoded) sigma factor is associated with the core the holoenzyme is formed, which can initiate transcription.

The protein localises to the plastid. Its subcellular location is the chloroplast. The enzyme catalyses RNA(n) + a ribonucleoside 5'-triphosphate = RNA(n+1) + diphosphate. Its function is as follows. DNA-dependent RNA polymerase catalyzes the transcription of DNA into RNA using the four ribonucleoside triphosphates as substrates. The chain is Putative DNA-directed RNA polymerase subunit alpha-like 3 (rpoAL3-A) from Pelargonium hortorum (Common geranium).